The following is a 145-amino-acid chain: Large ribosomal subunit protein uL16 (145 aa).

Residues Met-1–Met-17 show a composition bias toward basic residues. Positions Met-1 to Val-20 are disordered.

It belongs to the universal ribosomal protein uL16 family. In terms of assembly, part of the 50S ribosomal subunit.

Functionally, binds 23S rRNA and is also seen to make contacts with the A and possibly P site tRNAs. The polypeptide is Large ribosomal subunit protein uL16 (Acetivibrio thermocellus (strain ATCC 27405 / DSM 1237 / JCM 9322 / NBRC 103400 / NCIMB 10682 / NRRL B-4536 / VPI 7372) (Clostridium thermocellum)).